Reading from the N-terminus, the 329-residue chain is uncharacterized protein (329 aa).

9 consecutive transmembrane segments (helical) span residues 5-24 (NLLLLILLHIGAFLFPFLTV), 34-56 (IAVALALLAVVLMSEALSIYLIF), 92-114 (FGYIIIGFPAAGLMLCGAVLEWG), 124-146 (IIFFAFIVPLLQLCLFPLVVLFY), 159-181 (SANFSVFWAKLSIAGLVLVLLSL), 196-218 (TAHRTAFILAPLFNIFVGALQYL), 231-253 (FSIVLFASPLLSFALLLELLGAY), 263-285 (LIGVSVIFLAMFAATWVVLRLFG), and 306-328 (FWLFWVNAAIVGIGIFFVIRILT).

The protein localises to the cell membrane. This is an uncharacterized protein from Archaeoglobus fulgidus (strain ATCC 49558 / DSM 4304 / JCM 9628 / NBRC 100126 / VC-16).